Reading from the N-terminus, the 224-residue chain is Urease accessory protein UreF (224 aa).

This sequence belongs to the UreF family. In terms of assembly, ureD, UreF and UreG form a complex that acts as a GTP-hydrolysis-dependent molecular chaperone, activating the urease apoprotein by helping to assemble the nickel containing metallocenter of UreC. The UreE protein probably delivers the nickel.

It is found in the cytoplasm. Its function is as follows. Required for maturation of urease via the functional incorporation of the urease nickel metallocenter. The polypeptide is Urease accessory protein UreF (Enterobacter sp. (strain 638)).